The following is a 305-amino-acid chain: GMP synthase [glutamine-hydrolyzing] subunit B (305 aa).

The 183-residue stretch at 2–184 (VNTERFIQQA…LGLPREIQHR (183 aa)) folds into the GMPS ATP-PPase domain. ATP is bound at residue 29 to 35 (SGGVDSS).

In terms of assembly, heterodimer composed of a glutamine amidotransferase subunit (A) and a GMP-binding subunit (B).

The catalysed reaction is XMP + L-glutamine + ATP + H2O = GMP + L-glutamate + AMP + diphosphate + 2 H(+). It participates in purine metabolism; GMP biosynthesis; GMP from XMP (L-Gln route): step 1/1. Catalyzes the synthesis of GMP from XMP. This Methanosphaerula palustris (strain ATCC BAA-1556 / DSM 19958 / E1-9c) protein is GMP synthase [glutamine-hydrolyzing] subunit B.